The sequence spans 98 residues: uncharacterized protein (98 aa).

The span at 1-10 (MARRRKPLHR) shows a compositional bias: basic residues. The tract at residues 1–21 (MARRRKPLHRQRPEPPSWALR) is disordered.

This is an uncharacterized protein from Mycobacterium bovis (strain ATCC BAA-935 / AF2122/97).